Here is a 490-residue protein sequence, read N- to C-terminus: UDP-N-acetylmuramyl-tripeptide synthetase (490 aa).

Residue 113–119 (GTDGKTT) coordinates ATP. Residues 158 to 159 (TT), serine 185, and arginine 193 contribute to the UDP-N-acetyl-alpha-D-muramoyl-L-alanyl-D-glutamate site. Lysine 225 carries the post-translational modification N6-carboxylysine.

Belongs to the MurCDEF family. MurE subfamily. In terms of processing, carboxylation is probably crucial for Mg(2+) binding and, consequently, for the gamma-phosphate positioning of ATP.

It localises to the cytoplasm. It participates in cell wall biogenesis; peptidoglycan biosynthesis. Catalyzes the addition of an amino acid to the nucleotide precursor UDP-N-acetylmuramoyl-L-alanyl-D-glutamate (UMAG) in the biosynthesis of bacterial cell-wall peptidoglycan. This Deinococcus radiodurans (strain ATCC 13939 / DSM 20539 / JCM 16871 / CCUG 27074 / LMG 4051 / NBRC 15346 / NCIMB 9279 / VKM B-1422 / R1) protein is UDP-N-acetylmuramyl-tripeptide synthetase.